The chain runs to 388 residues: Calreticulin (388 aa).

The first 17 residues, M1–A17, serve as a signal peptide directing secretion. C103 and C135 are oxidised to a cystine. An alpha-D-glucoside is bound by residues Y107, K109, Y126, and D133. Tandem repeats lie at residues A189–F200, D208–E219, D225–K236, D242–D253, G257–P267, G271–P281, and G285–P295. Residues A189–D253 form a 4 X approximate repeats region. A disordered region spans residues E193 to A282. Residues K205–E215 show a composition bias toward basic and acidic residues. The segment covering D216–D227 has biased composition (acidic residues). The segment covering D228 to E249 has biased composition (basic and acidic residues). Residues D250 to W259 show a composition bias toward acidic residues. The 3 X approximate repeats stretch occupies residues G257 to P295. Residue D315 coordinates an alpha-D-glucoside. The segment at R349 to K388 is disordered. 2 stretches are compositionally biased toward basic residues: residues K354 to K365 and K373 to K388.

Belongs to the calreticulin family.

The protein resides in the endoplasmic reticulum lumen. In terms of biological role, molecular calcium-binding chaperone promoting folding, oligomeric assembly and quality control in the ER via the calreticulin/calnexin cycle. This lectin may interact transiently with almost all of the monoglucosylated glycoproteins that are synthesized in the ER. In Onchocerca volvulus, this protein is Calreticulin (crt-1).